The following is a 154-amino-acid chain: Aminoalkylphosphonate N-acetyltransferase (154 aa).

Residues 14-154 (CELRHATTED…QSHFRFTKAL (141 aa)) form the N-acetyltransferase domain.

Homodimer. A divalent metal cation is required as a cofactor.

It catalyses the reaction aminomethylphosphonate + acetyl-CoA = 2-N-acetamidomethylphosphonate + CoA. The enzyme catalyses (S)-1-aminoethylphosphonate + acetyl-CoA = [(1S)-1-acetamidoethyl]phosphonate + CoA. Aminoalkylphosphonate N-acetyltransferase which is able to acetylate a range of aminoalkylphosphonic acids, including (S)-1-aminoethylphosphonate ((S)-1AEP) and 2-aminoethylphosphonate, using acetyl-CoA as acetyl donor. Its physiological role in S.typhimurium is unclear. However, by acetylating (S)-1AEP, PhnO would protect against the deleterious effects of (S)-1AEP, a structural analog of D-alanine that has antibacterial properties. This chain is Aminoalkylphosphonate N-acetyltransferase, found in Salmonella typhimurium (strain LT2 / SGSC1412 / ATCC 700720).